A 452-amino-acid chain; its full sequence is tRNA modification GTPase MnmE (452 aa).

(6S)-5-formyl-5,6,7,8-tetrahydrofolate-binding residues include R21, E78, and K118. Residues 214–375 (GMKVVIAGRP…LREHLKKSMG (162 aa)) enclose the TrmE-type G domain. Residue N224 participates in K(+) binding. GTP-binding positions include 224–229 (NAGKSS), 243–249 (TNIAGTT), and 268–271 (DTAG). A Mg(2+)-binding site is contributed by S228. K(+) contacts are provided by T243, I245, and T248. T249 is a Mg(2+) binding site. Residue K452 coordinates (6S)-5-formyl-5,6,7,8-tetrahydrofolate.

The protein belongs to the TRAFAC class TrmE-Era-EngA-EngB-Septin-like GTPase superfamily. TrmE GTPase family. In terms of assembly, homodimer. Heterotetramer of two MnmE and two MnmG subunits. Requires K(+) as cofactor.

It is found in the cytoplasm. Its function is as follows. Exhibits a very high intrinsic GTPase hydrolysis rate. Involved in the addition of a carboxymethylaminomethyl (cmnm) group at the wobble position (U34) of certain tRNAs, forming tRNA-cmnm(5)s(2)U34. The protein is tRNA modification GTPase MnmE of Actinobacillus pleuropneumoniae serotype 5b (strain L20).